A 914-amino-acid polypeptide reads, in one-letter code: Scaffold attachment factor B1 (914 aa).

Residues 1–24 (MAETLSGLGDSGAAGAAALSSASS) are compositionally biased toward low complexity. Residues 1–33 (MAETLSGLGDSGAAGAAALSSASSETGTRRLSD) form a disordered region. The residue at position 2 (Ala-2) is an N-acetylalanine. Phosphoserine occurs at positions 24 and 55. In terms of domain architecture, SAP spans 31–65 (LSDLRVIDLRAELRKRNVDSSGNKSVLMERLKKAI). Residues 64–117 (AIEDEGGNPDEIEITSEGNKKTSKRSSKGRKPEEEGVEDNGLEENSGDGQEDVE) are disordered. A compositionally biased stretch (acidic residues) spans 67 to 77 (DEGGNPDEIEI). The residue at position 79 (Ser-79) is a Phosphoserine. Residues 98 to 117 (EGVEDNGLEENSGDGQEDVE) are compositionally biased toward acidic residues. Residues Lys-172 and Lys-186 each participate in a glycyl lysine isopeptide (Lys-Gly) (interchain with G-Cter in SUMO2) cross-link. At Thr-188 the chain carries Phosphothreonine. 3 positions are modified to phosphoserine: Ser-195, Ser-197, and Ser-209. The segment at 221-407 (LGETCKSEPV…EKGRSSCGRN (187 aa)) is disordered. Basic and acidic residues predominate over residues 225–234 (CKSEPVKEES). Residue Lys-231 forms a Glycyl lysine isopeptide (Lys-Gly) (interchain with G-Cter in SUMO) linkage. Residues 275–286 (SESTAHAQSSKA) are compositionally biased toward polar residues. Over residues 293–309 (VKREPAEQPGDGERTDC) the composition is skewed to basic and acidic residues. A Glycyl lysine isopeptide (Lys-Gly) (interchain with G-Cter in SUMO) cross-link involves residue Lys-294. Over residues 319–330 (EQSSAASELAEA) the composition is skewed to low complexity. A compositionally biased stretch (basic and acidic residues) spans 346–359 (EARDSKEDGRKFDF). Positions 371–383 (ESSTSEGADQKMS) are enriched in polar residues. Lys-381 is covalently cross-linked (Glycyl lysine isopeptide (Lys-Gly) (interchain with G-Cter in SUMO2)). 2 positions are modified to phosphoserine: Ser-383 and Ser-384. The span at 390 to 401 (DTKRLSKEEKGR) shows a compositional bias: basic and acidic residues. Lys-392 is covalently cross-linked (Glycyl lysine isopeptide (Lys-Gly) (interchain with G-Cter in SUMO2)). One can recognise an RRM domain in the interval 406 to 484 (RNFWVSGLSS…KMISVEKAKN (79 aa)). Residue Ser-415 is modified to Phosphoserine. 2 stretches are compositionally biased toward basic and acidic residues: residues 477–551 (ISVE…ERSR) and 559–570 (GTERTVVMDKSK). 3 disordered regions span residues 477-636 (ISVE…QAQW), 670-706 (RERM…QERR), and 748-914 (FDHR…TRRY). Glycyl lysine isopeptide (Lys-Gly) (interchain with G-Cter in SUMO2) cross-links involve residues Lys-483, Lys-514, Lys-543, and Lys-570. Residues 528–791 (GDDGSGEKSK…RHGGPERHGR (264 aa)) form an interaction with POLR2A; SFRS1; SFRS9 and SFRS10 region. Residue Lys-578 forms a Glycyl lysine isopeptide (Lys-Gly) (interchain with G-Cter in SUMO1); alternate linkage. Lys-578 is covalently cross-linked (Glycyl lysine isopeptide (Lys-Gly) (interchain with G-Cter in SUMO2); alternate). Phosphoserine is present on residues Ser-580, Ser-582, Ser-601, and Ser-604. Basic and acidic residues predominate over residues 581–636 (GSKERASKSLDRKSASREKRSVVSFDKVKEPRKSRDSESHRVRERSEREQRMQAQW). Residues 599–616 (KRSVVSFDKVKEPRKSRD) carry the Nuclear localization signal motif. Positions 599 to 914 (KRSVVSFDKV…PSDARFTRRY (316 aa)) are interaction with SAFB2. N6-acetyllysine is present on Lys-607. Residues 748-795 (FDHRDRGRYPDHSVDRREGSRSMMGEREGQHYPERHGGPERHGRDSRD) show a composition bias toward basic and acidic residues. Arg-810 bears the Omega-N-methylarginine mark. Composition is skewed to basic and acidic residues over residues 816–831 (PRRD…DDRA) and 840–850 (MMDRDHKRWQG). Lys-846 participates in a covalent cross-link: Glycyl lysine isopeptide (Lys-Gly) (interchain with G-Cter in SUMO2). Asymmetric dimethylarginine is present on residues Arg-867, Arg-873, and Arg-883. Over residues 891 to 900 (GMQGGFGGQS) the composition is skewed to gly residues. Basic and acidic residues predominate over residues 904 to 914 (RPSDARFTRRY).

As to quaternary structure, monomer and homodimer. Interacts with KHDRBS3. Interacts with CLK2. Interacts with POLR2A, ASF/SRSF1, SRp30c/SRFS9 and TRA2B/SFRS10. Interacts with SRPK1 and inhibits its activity. Interacts with RBMX. Interacts with FUS. Interacts with ZBED4. Post-translationally, sumoylated by PIAS1 with SUMO1 and SUMO2/3, desumoylated by SENP1. Sumoylation is required for transcriptional repressor activity.

Its subcellular location is the nucleus. Binds to scaffold/matrix attachment region (S/MAR) DNA and forms a molecular assembly point to allow the formation of a 'transcriptosomal' complex (consisting of SR proteins and RNA polymerase II) coupling transcription and RNA processing. Functions as an estrogen receptor corepressor and can also bind to the HSP27 promoter and decrease its transcription. Thereby acts as a negative regulator of cell proliferation. When associated with RBMX, binds to and stimulates transcription from the SREBF1 promoter. This chain is Scaffold attachment factor B1 (SAFB), found in Pongo abelii (Sumatran orangutan).